The chain runs to 240 residues: Uridylate kinase (240 aa).

12–15 (KLSG) is a binding site for ATP. An involved in allosteric activation by GTP region spans residues 20-25 (GEDGFG). Residue Gly54 coordinates UMP. ATP is bound by residues Gly55 and Arg59. Residues Asp74 and 135-142 (TGNPYFST) contribute to the UMP site. 3 residues coordinate ATP: Asn163, Tyr169, and Asp172.

The protein belongs to the UMP kinase family. In terms of assembly, homohexamer.

It is found in the cytoplasm. It catalyses the reaction UMP + ATP = UDP + ADP. The protein operates within pyrimidine metabolism; CTP biosynthesis via de novo pathway; UDP from UMP (UMPK route): step 1/1. Its activity is regulated as follows. Allosterically activated by GTP. Probably inhibited by UTP. Its function is as follows. Catalyzes the reversible phosphorylation of UMP to UDP. In Enterococcus faecalis (strain ATCC 700802 / V583), this protein is Uridylate kinase (pyrH).